Here is a 130-residue protein sequence, read N- to C-terminus: Small ribosomal subunit protein uS11 (130 aa).

Belongs to the universal ribosomal protein uS11 family. Part of the 30S ribosomal subunit. Interacts with proteins S7 and S18. Binds to IF-3.

In terms of biological role, located on the platform of the 30S subunit, it bridges several disparate RNA helices of the 16S rRNA. Forms part of the Shine-Dalgarno cleft in the 70S ribosome. The protein is Small ribosomal subunit protein uS11 of Kosmotoga olearia (strain ATCC BAA-1733 / DSM 21960 / TBF 19.5.1).